The chain runs to 274 residues: tRNA-cytidine(32) 2-sulfurtransferase (274 aa).

The short motif at 40-45 is the PP-loop motif element; sequence SGGKDS. [4Fe-4S] cluster contacts are provided by Cys115, Cys118, and Cys206.

Belongs to the TtcA family. As to quaternary structure, homodimer. Mg(2+) serves as cofactor. The cofactor is [4Fe-4S] cluster.

The protein resides in the cytoplasm. It carries out the reaction cytidine(32) in tRNA + S-sulfanyl-L-cysteinyl-[cysteine desulfurase] + AH2 + ATP = 2-thiocytidine(32) in tRNA + L-cysteinyl-[cysteine desulfurase] + A + AMP + diphosphate + H(+). It functions in the pathway tRNA modification. In terms of biological role, catalyzes the ATP-dependent 2-thiolation of cytidine in position 32 of tRNA, to form 2-thiocytidine (s(2)C32). The sulfur atoms are provided by the cysteine/cysteine desulfurase (IscS) system. The chain is tRNA-cytidine(32) 2-sulfurtransferase from Pseudomonas putida (strain ATCC 700007 / DSM 6899 / JCM 31910 / BCRC 17059 / LMG 24140 / F1).